A 580-amino-acid chain; its full sequence is Double-stranded RNA-binding protein Staufen homolog 1 (580 aa).

Ser-2 is subject to N-acetylserine. Over residues 34–44 (SIPSTTSSLPS) the composition is skewed to polar residues. The segment at 34–59 (SIPSTTSSLPSENAGRPIQNSALPSA) is disordered. The DRBM 1 domain occupies 72–162 (TPTVELNALC…AAKALRTLQS (91 aa)). An Asymmetric dimethylarginine modification is found at Arg-108. The residue at position 115 (Arg-115) is an Asymmetric dimethylarginine; alternate. Arg-115 bears the Omega-N-methylarginine; alternate mark. Positions 158–189 (RTLQSEPLPERPEGRRPGEQVNGRESEEENLN) are disordered. Basic and acidic residues predominate over residues 165 to 182 (LPERPEGRRPGEQVNGRE). Ser-183 bears the Phosphoserine mark. A DRBM 2 domain is found at 191-258 (SEISQVFEIA…AIAVLEELKK (68 aa)). Residue Ser-285 is modified to Phosphoserine. One can recognise a DRBM 3 domain in the interval 293–361 (NPISRLAQIQ…AENMLEILGF (69 aa)). Residues 367 to 404 (QPTKPALKSEEKTPIKKPGDGRKVTFFEPGSGDENGTS) are disordered. A compositionally biased stretch (basic and acidic residues) spans 373–391 (LKSEEKTPIKKPGDGRKVT). Residue Ser-397 is modified to Phosphoserine.

In terms of assembly, binds tubulin. Binds with low affinity single-stranded RNA or DNA homopolymers. Interacts with CASC3 in an RNA-dependent manner. Identified in a mRNP complex, at least composed of DHX9, DDX3X, ELAVL1, HNRNPU, IGF2BP1, ILF3, PABPC1, PCBP2, PTBP2, STAU1, STAU2, SYNCRIP and YBX1. Interacts with the influenza virus nonstructural protein NS1.

The protein resides in the cytoplasm. Its subcellular location is the rough endoplasmic reticulum. Binds double-stranded RNA (regardless of the sequence) and tubulin. May play a role in specific positioning of mRNAs at given sites in the cell by cross-linking cytoskeletal and RNA components, and in stimulating their translation at the site. This is Double-stranded RNA-binding protein Staufen homolog 1 (STAU1) from Ailuropoda melanoleuca (Giant panda).